The primary structure comprises 268 residues: Mediator of RNA polymerase II transcription subunit 18 (268 aa).

This sequence belongs to the Mediator complex subunit 18 family. Component of the Mediator complex.

The protein resides in the nucleus. In terms of biological role, component of the Mediator complex, a coactivator involved in the regulated transcription of nearly all RNA polymerase II-dependent genes. Mediator functions as a bridge to convey information from gene-specific regulatory proteins to the basal RNA polymerase II transcription machinery. Mediator is recruited to promoters by direct interactions with regulatory proteins and serves as a scaffold for the assembly of a functional preinitiation complex with RNA polymerase II and the general transcription factors. The protein is Mediator of RNA polymerase II transcription subunit 18 (srb5) of Neosartorya fischeri (strain ATCC 1020 / DSM 3700 / CBS 544.65 / FGSC A1164 / JCM 1740 / NRRL 181 / WB 181) (Aspergillus fischerianus).